The chain runs to 149 residues: NPC intracellular cholesterol transporter 2 (149 aa).

A signal peptide spans 1–19 (MHFLAAAFLLLTLSASALA). Cystine bridges form between C27-C140, C42-C47, and C93-C99. The N-linked (GlcNAc...) asparagine glycan is linked to N58. K116 carries the post-translational modification N6-acetyllysine.

It belongs to the NPC2 family. In terms of assembly, interacts with NPC1 (via the second lumenal domain) in a cholestrol-dependent manner. Interacts with NUS1/NgBR, the interaction stabilizes NCP2 and regulates cholesterol trafficking. Interacts with DHDDS. Interacts with NEDD4L (via C2 domain). Interacts with NPC1L1. Post-translationally, N-glycosylated. Found in the epididymal fluid as a 19 kDa glycoprotein that is processed during its passage through the epididymis into a 16 kDa protein. As to expression, found in the fluid from the distal caput to cauda epididymis, not detected in the rete testis and the proximal and middle caput epididymal fluids (at protein level).

It localises to the secreted. The protein localises to the endoplasmic reticulum. It is found in the lysosome. The enzyme catalyses cholesterol(in) = cholesterol(out). In terms of biological role, intracellular cholesterol transporter which acts in concert with NPC1 and plays an important role in the egress of cholesterol from the lysosomal compartment. Unesterified cholesterol that has been released from LDLs in the lumen of the late endosomes/lysosomes is transferred by NPC2 to the cholesterol-binding pocket in the N-terminal domain of NPC1. May bind and mobilize cholesterol that is associated with membranes. NPC2 binds cholesterol with a 1:1 stoichiometry. Can bind a variety of sterols, including lathosterol, desmosterol and the plant sterols stigmasterol and beta-sitosterol. The secreted form of NCP2 regulates biliary cholesterol secretion via stimulation of ABCG5/ABCG8-mediated cholesterol transport. This chain is NPC intracellular cholesterol transporter 2, found in Sus scrofa (Pig).